We begin with the raw amino-acid sequence, 356 residues long: tRNA N6-adenosine threonylcarbamoyltransferase (356 aa).

Residues H115 and H119 each coordinate Fe cation. Residues 138 to 142, D171, G184, and N283 each bind substrate; that span reads LVSGG. Residue D311 participates in Fe cation binding.

It belongs to the KAE1 / TsaD family. It depends on Fe(2+) as a cofactor.

The protein resides in the cytoplasm. The enzyme catalyses L-threonylcarbamoyladenylate + adenosine(37) in tRNA = N(6)-L-threonylcarbamoyladenosine(37) in tRNA + AMP + H(+). Required for the formation of a threonylcarbamoyl group on adenosine at position 37 (t(6)A37) in tRNAs that read codons beginning with adenine. Is involved in the transfer of the threonylcarbamoyl moiety of threonylcarbamoyl-AMP (TC-AMP) to the N6 group of A37, together with TsaE and TsaB. TsaD likely plays a direct catalytic role in this reaction. The protein is tRNA N6-adenosine threonylcarbamoyltransferase of Synechococcus sp. (strain WH7803).